We begin with the raw amino-acid sequence, 448 residues long: SET domain-containing protein SmydA-8, isoform B (448 aa).

The 232-residue stretch at 42 to 273 (PSWRVADSPI…AGAEITMSYA (232 aa)) folds into the SET domain.

The protein belongs to the class V-like SAM-binding methyltransferase superfamily.

The protein is SET domain-containing protein SmydA-8, isoform B of Drosophila melanogaster (Fruit fly).